A 198-amino-acid chain; its full sequence is Ribonuclease HII (198 aa).

The region spanning 1-198 (MLCGIDEAGR…QRRSFFVKNL (198 aa)) is the RNase H type-2 domain. A divalent metal cation contacts are provided by Asp6, Glu7, and Asp112.

This sequence belongs to the RNase HII family. The cofactor is Mn(2+). Mg(2+) is required as a cofactor.

The protein resides in the cytoplasm. The enzyme catalyses Endonucleolytic cleavage to 5'-phosphomonoester.. In terms of biological role, endonuclease that specifically degrades the RNA of RNA-DNA hybrids. This Treponema denticola (strain ATCC 35405 / DSM 14222 / CIP 103919 / JCM 8153 / KCTC 15104) protein is Ribonuclease HII.